We begin with the raw amino-acid sequence, 1242 residues long: Membrane-associated phosphatidylinositol transfer protein 1 (1242 aa).

3 positions are modified to phosphothreonine: Thr-59, Thr-282, and Thr-287. Residues 259–330 (CNTGSEGPEA…HGGGVSPQSL (72 aa)) are disordered. A compositionally biased stretch (polar residues) spans 272 to 282 (GKPSTETQPGT). The span at 299 to 319 (ASPDASFGKQWSSSSRSSYSS) shows a compositional bias: low complexity. Residues Ser-300, Ser-304, Ser-319, Ser-326, Ser-329, Ser-342, Ser-345, Ser-346, and Ser-373 each carry the phosphoserine modification. Ser-382 is subject to Phosphoserine; by CDK1. A compositionally biased stretch (low complexity) spans 581-593 (AGTGSRGSSRRGS). The disordered stretch occupies residues 581-678 (AGTGSRGSSR…PASSEAPDGP (98 aa)). Ser-593, Ser-600, and Ser-621 each carry phosphoserine. Residues 643 to 656 (GSQNSLQVAPTVTS) are compositionally biased toward polar residues. Residues 684-878 (LDFKVSGFFL…VAFILRQVIE (195 aa)) enclose the DDHD domain. Residue Ser-894 is modified to Phosphoserine. Residues 1207-1242 (RSRGPSQVDLEGPGTPPTTLARGKTRSISLKLDSEE) are disordered. Omega-N-methylarginine is present on Arg-1209. Residue Ser-1235 is modified to Phosphoserine.

This sequence belongs to the PtdIns transfer protein family. PI transfer class IIA subfamily. As to quaternary structure, interacts with PIK4CA and VAPB. Interacts with PTK2B via its C-terminus. Interacts with RHOA. Has higher affinity for the inactive, GDP-bound form of RHOA. The CDK1-phosphorylated form interacts with PLK1. In terms of processing, phosphorylated on multiple sites by CDK1 at the onset of mitosis. Phosphorylation facilitates dissociation from the Golgi complex and is required for interaction with PLK1. Phosphorylated on threonine residues upon treatment with oleic acid. Post-translationally, phosphorylated on tyrosine residues by PTK2B.

The protein localises to the cytoplasm. The protein resides in the golgi apparatus. It is found in the golgi stack membrane. Its subcellular location is the endoplasmic reticulum membrane. It localises to the lipid droplet. The protein localises to the cleavage furrow. The protein resides in the midbody. It catalyses the reaction a 1,2-diacyl-sn-glycero-3-phospho-(1D-myo-inositol)(in) = a 1,2-diacyl-sn-glycero-3-phospho-(1D-myo-inositol)(out). In terms of biological role, catalyzes the transfer of phosphatidylinositol (PI) between membranes. Binds PI, phosphatidylcholine (PC) and phosphatidic acid (PA) with the binding affinity order of PI &gt; PA &gt; PC. Regulates RHOA activity, and plays a role in cytoskeleton remodeling. Necessary for normal completion of cytokinesis. Plays a role in maintaining normal diacylglycerol levels in the Golgi apparatus. Necessary for maintaining the normal structure of the endoplasmic reticulum and the Golgi apparatus. Required for protein export from the endoplasmic reticulum and the Golgi. Binds calcium ions. This Rattus norvegicus (Rat) protein is Membrane-associated phosphatidylinositol transfer protein 1 (Pitpnm1).